Here is a 310-residue protein sequence, read N- to C-terminus: N-acetyl-gamma-glutamyl-phosphate reductase (310 aa).

Residue Cys117 is part of the active site.

Belongs to the NAGSA dehydrogenase family. Type 2 subfamily.

Its subcellular location is the cytoplasm. The enzyme catalyses N-acetyl-L-glutamate 5-semialdehyde + phosphate + NADP(+) = N-acetyl-L-glutamyl 5-phosphate + NADPH + H(+). It functions in the pathway amino-acid biosynthesis; L-arginine biosynthesis; N(2)-acetyl-L-ornithine from L-glutamate: step 3/4. Functionally, catalyzes the NADPH-dependent reduction of N-acetyl-5-glutamyl phosphate to yield N-acetyl-L-glutamate 5-semialdehyde. This chain is N-acetyl-gamma-glutamyl-phosphate reductase, found in Brucella melitensis biotype 1 (strain ATCC 23456 / CCUG 17765 / NCTC 10094 / 16M).